Reading from the N-terminus, the 218-residue chain is MFEYLIKFYPKIFFIVEGTLVTLKYSVIAVIFGLVIGMLLAICKVNKNRALRLFANFYTSIFRGTPLLIQLSIIYFASPYIIGIKFSVFMAGAIAFSLNSGAYVSEVIRAGINAVDKGQFEAAEALAIPKFLITKDIILPQAVKNIFPSLVNELVNLIKESAIISMLGEMDLMRRAQIVSIETYNYFFPMLIAACCYYILVMLISFIAKIIEKKMIVN.

Positions 19–208 constitute an ABC transmembrane type-1 domain; it reads TLVTLKYSVI…ILVMLISFIA (190 aa). 4 helical membrane-spanning segments follow: residues 25–45, 57–79, 86–108, and 187–207; these read YSVI…ICKV, FYTS…FASP, FSVF…SEVI, and FFPM…ISFI.

The protein belongs to the binding-protein-dependent transport system permease family. HisMQ subfamily.

It localises to the cell inner membrane. Its function is as follows. Part of the binding-protein-dependent transport system for glutamine; probably responsible for the translocation of the substrate across the membrane. In Rickettsia conorii (strain ATCC VR-613 / Malish 7), this protein is Putative glutamine transport system permease protein GlnP (glnP).